The chain runs to 407 residues: MASSSVFAGLAQAPEDPILGVTVAYNKDPSPVKVNLGVGAYRTEEGKPLVLNVVRRAEQMLINNPSRVKEYLPITGLADFNKLSAKLIFGADSPAIQENRVATVQCLSGTGSLRVGGEFLARHYHERTIYIPQPTWGNHPKVFTLAGLTVRSYRYYDPATRGLDFQGLLEDLGSAPSGAIVLLHACAHNPTGVDPTLDQWEQIRQLMRSKALLPFFDSAYQGFASGSLDQDAQSVRMFVADGGELLMAQSYAKNMGLYGERVGALSIVCGSADVAVRVESQLKLVIRPMYSNPPIHGASIVATILKDSAMFNEWTVELKGMADRIISMRQQLFDALKTRETPGDWSHIIKQIGMFTFTGLNSDQVAFMRQEYHIYMTSDGRISMAGLSGRTIPHLADAIHAAVTKLK.

Residues G39, W136, and N189 each coordinate L-aspartate. K253 carries the N6-(pyridoxal phosphate)lysine modification. Residue R381 participates in L-aspartate binding.

Belongs to the class-I pyridoxal-phosphate-dependent aminotransferase family. Homodimer. It depends on pyridoxal 5'-phosphate as a cofactor.

The protein resides in the cytoplasm. The enzyme catalyses L-aspartate + 2-oxoglutarate = oxaloacetate + L-glutamate. Its function is as follows. Important for the metabolism of amino acids and Krebs-cycle related organic acids. In plants, it is involved in nitrogen metabolism and in aspects of carbon and energy metabolism. The polypeptide is Aspartate aminotransferase, cytoplasmic (Oryza sativa subsp. japonica (Rice)).